Reading from the N-terminus, the 302-residue chain is MALRLDGKQLAAELEQRLQAEIAAGLVQAGRPPGLAVLRIGDDPASGVYVANKQKACGRIGVASHLTHLPETVSVSKVLATIQALNIDERVDGILLQLPLPKGLDEGPLLAAIDPEKDADGLHTLNLGRLLKGEPGPRSCTPAGVMALLARHQISLERKRAVVIGRSILVGQPMALMLQAANATVSVAHSHTGDLASLTQQADVLVVAAGRARMIGAEHVKPGAVVVDVGIHRLPLDPELGTQAKARLCGDVRTQEVEPLASALTPVPGGVGPMTVTMLLVNTVARWQQHCGLPFGLRDLLV.

Residues 165–167 (GRS), Ser190, and Ile231 each bind NADP(+).

Belongs to the tetrahydrofolate dehydrogenase/cyclohydrolase family. As to quaternary structure, homodimer.

It carries out the reaction (6R)-5,10-methylene-5,6,7,8-tetrahydrofolate + NADP(+) = (6R)-5,10-methenyltetrahydrofolate + NADPH. It catalyses the reaction (6R)-5,10-methenyltetrahydrofolate + H2O = (6R)-10-formyltetrahydrofolate + H(+). The protein operates within one-carbon metabolism; tetrahydrofolate interconversion. In terms of biological role, catalyzes the oxidation of 5,10-methylenetetrahydrofolate to 5,10-methenyltetrahydrofolate and then the hydrolysis of 5,10-methenyltetrahydrofolate to 10-formyltetrahydrofolate. The chain is Bifunctional protein FolD from Prochlorococcus marinus (strain MIT 9313).